We begin with the raw amino-acid sequence, 907 residues long: Envelope glycoprotein B (907 aa).

Positions 1–22 (MESRIWCLVVCVNLCIVCLGAA) are cleaved as a signal peptide. Over 23–751 (VSSSSTRGTS…EGVATFLKNP (729 aa)) the chain is Virion surface. The segment at 29-62 (RGTSATHSHHSSHTTSAAHSRSGSVSQRVTSSQT) is disordered. A compositionally biased stretch (low complexity) spans 41–62 (HTTSAAHSRSGSVSQRVTSSQT). N-linked (GlcNAc...) asparagine; by host glycans are attached at residues N68, N73, and N85. 4 disulfides stabilise this stretch: C94–C551, C111–C507, C185–C250, and C344–C391. Residues 152-158 (SYAYIHT) are involved in fusion and/or binding to host membrane. Residue N208 is glycosylated (N-linked (GlcNAc...) asparagine; by host). The interval 237–244 (GSTWLYRE) is involved in fusion and/or binding to host membrane. N-linked (GlcNAc...) asparagine; by host glycosylation is found at N281, N286, N302, N341, N383, N405, N409, N417, N447, N452, N456, N466, N555, and N586. An intrachain disulfide couples C574 to C611. Hydrophobic membrane proximal region regions lie at residues 697 to 749 (VEDK…TFLK) and 708 to 748 (YLKG…ATFL). The chain crosses the membrane as a helical span at residues 752-772 (FGAFTIILVAIAVVIIIYLIY). Residues 773-907 (TRQRRLCMQP…LKDSDEEENV (135 aa)) lie on the Intravirion side of the membrane. Polar residues-rich tracts occupy residues 798 to 810 (VTSG…SLQA) and 860 to 877 (RAQQ…GTQD). Disordered regions lie at residues 798-838 (VTSG…TAAP) and 860-907 (RAQQ…EENV). Residues 878-887 (KGQKPNLLDR) are compositionally biased toward basic and acidic residues. Residues 895–898 (YRHL) carry the Internalization motif motif.

Belongs to the herpesviridae glycoprotein B family. As to quaternary structure, homotrimer; disulfide-linked. Binds to heparan sulfate proteoglycans. Interacts with gH/gL heterodimer. Interacts with host C-type lectin CD209/DC-SIGN. Interacts with host ITGB1, EGFR, and PDGFRA. In terms of processing, a proteolytic cleavage by host furin generates two subunits that remain linked by disulfide bonds.

The protein resides in the virion membrane. It is found in the host cell membrane. The protein localises to the host endosome membrane. Its subcellular location is the host Golgi apparatus membrane. Envelope glycoprotein that plays a role in host cell entry, cell to-cell virus transmission, and fusion of infected cells. May be involved in the initial attachment via binding to heparan sulfate together with the gM/gN complex that binds heparin with higher affinity. Interacts with host integrin ITGB1, PDGFRA and EGFR that likely serve as postattachment entry receptors. Also participates in the fusion of viral and cellular membranes leading to virus entry into the host cell. Membrane fusion is mediated by the fusion machinery composed at least of gB and the heterodimer gH/gL. The protein is Envelope glycoprotein B of Homo sapiens (Human).